The chain runs to 1464 residues: MSKKQYKISHFMTTKISLRISSPEEILKDSYGEIIKPETINYRTNKPERNGLFCEKIFGPIKDYECFCGKYKKKLYKEIIRLRQLNKELKVKGLFCNRCGVEITKNTVRRTRMGHINLVVPIVHIWGFRSTPNKIGSILGLSSQQLDMIIYYERYVVIQPGIANSYNNLSIKKLDLLTEEEYTYILNKIPIGNKYLYDNDPNKFIAKMGAECLEELLIRVDLEVLLSDLKKEIKNEESKQRKIELFKRLNVVECFIEGKKKGNKIESIILKVLPVIPPELRPLVPLDGGGYASSDLNDFYRRILIRNNRLKRLIHISAPEIILRNEKRMLQEAVDSLLDNSKKILAVKSESNRPLKSLSDSLKGKQGRFRQNLLGKRVDYSARSVIVVGPKLKLHECGLPKEIAAEIYKPFLIRKLLERKIVRTVKSAKKLISKKDPIIWDILKYLLKGHPVLLNRAPTLHRLGIQSFQPKLIEGKAILLHPLVCSAFNADFDGDQMAVHLPLSNEAILEAKLLMLASQNILNPANGYPITVPSQDMVLGLYYMTKELKSTYESKIKGEGMCFSSLEEVEIAYNNKVVEIHAIIKVKVKILENIGLISKIIKTTVGRVLFNIVVPPKVGYINKLLTNKSLRKIINYILYNTNIPTTAKFLDKIKDLGYYHAFKGGLSFNLNDISIPKEKKSLVKRAIEKVSLVKDNYNLGLITNNERYNQIIDIWTNTNVSLTEKVINYMRKSKQGFNSVYMMLDSGARSSKEQIRQLSGMRGLMAKPQKTSSLGSEIIENPILSNFLEGLSILEYFISTHGARKGLADTALKTADAGYLTRRLVDSAQDVIIQEDDCKTLLGIKISAVKKKEKIIETLSSRVLGRIALNNIYDPTNNNVLIKSSQMIDEKNINLIEKASIDTIEVRSPLTCKSKTGICRKCYGRNLANGLMIQKGEAIGVIAAQSIGEPGTQLTLRTFHVGGTAGNIYEYSKIKAKYDGIIEYEDIQVVKNLVISRSSEIRLLNNHKDKVILMKKKIPYGAKLYVSNKQLVKKNDIICSWDPYNAVIIAEFTGKIRYSNIERDEQTGFKVISERKTPTLKIVNKKNEILKSYNIPVGAHLVVNDGDIINEGSILIKIPIKDLKSGDITGGLPRLSELFEARNDDDDDDYYDSDYYDYYDYSDDDDDYDDYDDYYYNYDDDENDNDNDYDYDYDYDYDYDSDSHNSYSHNSYSPSSNDNYDYDYDSDSDYDSDYDYGDISLNEILDIKGLRAAQKKLINEIQEVYRSQGVKINDKHFEVIVRQMTQKVEIIKSGDTSFLEGNIEYTDVFLEENKRILNMKFIEESGDSKKFFKGQLVNFHELKKENYLLKLSNKNKILFRDVITAISKPIIQGITKAALQTKSFLSAASFQETTKVLYEAAISNKTDYLNGLKENVILGNKIPAGTGLKKSSYEEIIIGDGNQKLKKKDSEINKKLKIENKILK.

Positions 66, 68, 96, and 99 each coordinate Zn(2+). Mg(2+)-binding residues include D491, D493, and D495. Zn(2+)-binding residues include C838, C912, C919, and C922. Acidic residues predominate over residues 1143–1200 (NDDDDDDYYDSDYYDYYDYSDDDDDYDDYDDYYYNYDDDENDNDNDYDYDYDYDYDYD). A disordered region spans residues 1143-1229 (NDDDDDDYYD…YDYDYDSDSD (87 aa)). Residues 1204–1219 (HNSYSHNSYSPSSNDN) show a composition bias toward low complexity. Acidic residues predominate over residues 1220–1229 (YDYDYDSDSD).

The protein belongs to the RNA polymerase beta' chain family. In terms of assembly, the RNAP catalytic core consists of 2 alpha, 1 beta, 1 beta' and 1 omega subunit. When a sigma factor is associated with the core the holoenzyme is formed, which can initiate transcription. Mg(2+) serves as cofactor. Zn(2+) is required as a cofactor.

The catalysed reaction is RNA(n) + a ribonucleoside 5'-triphosphate = RNA(n+1) + diphosphate. Functionally, DNA-dependent RNA polymerase catalyzes the transcription of DNA into RNA using the four ribonucleoside triphosphates as substrates. This is DNA-directed RNA polymerase subunit beta' from Karelsulcia muelleri (strain GWSS) (Sulcia muelleri).